The sequence spans 31 residues: U6-ctenitoxin-Co1a (31 aa).

Intrachain disulfides connect C2-C18 and C9-C23.

In terms of tissue distribution, expressed by the venom gland.

It localises to the secreted. Antagonist of L-type calcium channels (Cav1/CACNA1). This Ctenus ornatus (Brazilian spider) protein is U6-ctenitoxin-Co1a.